The chain runs to 299 residues: ATP phosphoribosyltransferase (299 aa).

The protein belongs to the ATP phosphoribosyltransferase family. Long subfamily. In terms of assembly, equilibrium between an active dimeric form, an inactive hexameric form and higher aggregates. Interconversion between the various forms is largely reversible and is influenced by the natural substrates and inhibitors of the enzyme. Mg(2+) serves as cofactor.

The protein resides in the cytoplasm. It carries out the reaction 1-(5-phospho-beta-D-ribosyl)-ATP + diphosphate = 5-phospho-alpha-D-ribose 1-diphosphate + ATP. Its pathway is amino-acid biosynthesis; L-histidine biosynthesis; L-histidine from 5-phospho-alpha-D-ribose 1-diphosphate: step 1/9. Feedback inhibited by histidine. Functionally, catalyzes the condensation of ATP and 5-phosphoribose 1-diphosphate to form N'-(5'-phosphoribosyl)-ATP (PR-ATP). Has a crucial role in the pathway because the rate of histidine biosynthesis seems to be controlled primarily by regulation of HisG enzymatic activity. The chain is ATP phosphoribosyltransferase from Blochmanniella floridana.